We begin with the raw amino-acid sequence, 669 residues long: MTAVAASSRVSDPLAASSSAHPRTLRSSPRKRTTSHDSSISPSAAQSKQLPRRKKPRTELVDESELDCAACPAVGQPAPTPGKGAASDRETWICCTHCKTWFHCICIGLENPDDFSKWYCQPCITRSEQTFESGTSSSHPPFANVVRPPRRKSERAKLQIDYAAIQEGIPADPLGRWKNLLNAYEFEPDQFRRMQGHEWTFDWLLHDESALKQPVLVPAPPDRSSQAPHVQAKAEDVAASPVPRPKPARAKKQATHRLVPCHTSIPGMVVPPPEMSIFDVADIIGHDTPVEVIDVASQSSSKASWTISEWAEYFNTPKEKKKKTLNVISLEVTGTPMQAYVEAPQLVRDLDWVTRDWPAERRDASCSENSWPKVQRYVLMGVEGAYSDWHIDFAGSSVYYHVIWGQKTFLFAPPTARNLAAYKAWCSSTRQDFDWLGDHLHSLTRVDIGPGETMLIPSGWLHCVYTPKNTLVVGGNFLTDWNVATQWKLVEIEEATKVPRKFRFPHLKRLSWFVAKGWNDRLEPLAEFETLTKEEDQVLEESAQVSAQVDVGSLTEVVPPLKVLNNIELVLQSLSDDLELIQDPYVAESGDERKVKQQKAAREAIPTHHVGNIQKAEAMLASLRQRVDRAKSLADAVQSERVCLTWEATRAKKAKAANGSAIKSRKARR.

Residues 1–61 are disordered; the sequence is MTAVAASSRV…RRKKPRTELV (61 aa). Polar residues-rich tracts occupy residues 16-27 and 36-49; these read ASSSAHPRTLRS and HDSS…QSKQ. A PHD-type zinc finger spans residues 65-126; that stretch reads ELDCAACPAV…KWYCQPCITR (62 aa). Disordered stretches follow at residues 131–150 and 220–256; these read FESG…RPPR and PPDR…QATH. A compositionally biased stretch (basic residues) spans 246–255; sequence KPARAKKQAT. One can recognise a JmjC domain in the interval 332-494; that stretch reads VTGTPMQAYV…TQWKLVEIEE (163 aa). H390 and D392 together coordinate Fe cation. K407 lines the substrate pocket. H462 serves as a coordination point for Fe cation.

Belongs to the JHDM1 histone demethylase family. It depends on Fe(2+) as a cofactor.

It is found in the nucleus. The enzyme catalyses N(6),N(6)-dimethyl-L-lysyl(36)-[histone H3] + 2 2-oxoglutarate + 2 O2 = L-lysyl(36)-[histone H3] + 2 formaldehyde + 2 succinate + 2 CO2. Functionally, histone demethylase that specifically demethylates 'Lys-36' of histone H3, thereby playing a central role in histone code. This Mycosarcoma maydis (Corn smut fungus) protein is JmjC domain-containing histone demethylation protein 1 (JHD1).